A 118-amino-acid polypeptide reads, in one-letter code: Large ribosomal subunit protein bL19 (118 aa).

The protein belongs to the bacterial ribosomal protein bL19 family.

Functionally, this protein is located at the 30S-50S ribosomal subunit interface and may play a role in the structure and function of the aminoacyl-tRNA binding site. This is Large ribosomal subunit protein bL19 from Salinibacter ruber (strain DSM 13855 / M31).